We begin with the raw amino-acid sequence, 436 residues long: Phosphomethylpyrimidine synthase (436 aa).

Residues Asn-69, Met-98, Tyr-127, His-163, Ser-185–Gly-187, Asp-226–Arg-229, and Glu-265 each bind substrate. His-269 provides a ligand contact to Zn(2+). Tyr-292 lines the substrate pocket. Zn(2+) is bound at residue His-333. The [4Fe-4S] cluster site is built by Cys-409, Cys-412, and Cys-416.

This sequence belongs to the ThiC family. [4Fe-4S] cluster is required as a cofactor.

The catalysed reaction is 5-amino-1-(5-phospho-beta-D-ribosyl)imidazole + S-adenosyl-L-methionine = 4-amino-2-methyl-5-(phosphooxymethyl)pyrimidine + CO + 5'-deoxyadenosine + formate + L-methionine + 3 H(+). It functions in the pathway cofactor biosynthesis; thiamine diphosphate biosynthesis. Functionally, catalyzes the synthesis of the hydroxymethylpyrimidine phosphate (HMP-P) moiety of thiamine from aminoimidazole ribotide (AIR) in a radical S-adenosyl-L-methionine (SAM)-dependent reaction. The chain is Phosphomethylpyrimidine synthase from Clostridium perfringens (strain SM101 / Type A).